Consider the following 2322-residue polypeptide: MNTTDCFIALLYALREIKALFLSRTQGKMEFTLYNGEKKVFYSRPNNHDNCWLNAILQLFRYVDEPFLEWVYDSPENLTLEAINKLEEITGLELHEGGPPALVVWNIKHLLYTGIGTASRPSEVCMVDGTDMCLADFHAGIFLKGQDHAVFACVTSDGWYAIDDEDFYPWTPNPADVLVFVPYDQEPFNAEWKAKVQKRLRGAGQSSPTTGSQNQSGNTGSIINNYYMQQYQNSMDTQLGDNAISGGSNEGSTDTTSTHTNNTQNNDWFSKLANTAFSGLFGALLADKKTEETTLLEDRILTTRNGHTTSTTQSSVGVTYGYATAEDFVSGPNTSGLETRVVQAERFFKTHLFDWVTSDPFGRCHLLELPTDHKGVYGSLTDSYAYMRNGWDVEVTAVGNQFNGGCLLVAMVPELCSISKRELYQLTLFPHQFINPRTNMTAHITVPYLGVNRYDQYKVHKPWTLVVMVVAPLTVNNEGAPQIKVYANIAPTNVHVAGELPSKEGIFPVACSDGYGGLVTTDPKTADPVYGKVFNPPRNLLPGRFTNLLDVAEACPTFLHFDGDVPYVTTKTDSDRVLAQFDLSLAAKHMSNTFLAGLAQYYTQYSGTINLHFMFTGPTDAKARYMVAYAPPGMEPPKTPEAAAHCIHAEWDTGLNSKFTFSIPYLSAADYAYTASDVAETTNVQGWVCLFQITHGKADGDALVVLASAGKDFDLRLPVDARTQTTSAGESADPVTATVENYGGETQVQRRQHTDIAFILDRFVKVKPKEQVNVLDLMQIPAHTLVGALLRTATYYFSDLELAVKHEGDLTWVPNGAPETALDNTTNPTAYHKEPLTRLALPYTAPHRVLATVYNGSSKYGDTSTNNVRGDLQVLAQKAERTLPTSFNFGAIKATRVTELLYRMKRAETYCPRPLLAIQPSDARHKQRIVAPAKQLLNFDLLKLAGDVESNPGPFFFSDVRANFTKLVDTVNQMQEDMSTKHGPDFNRLVSAFEELAAGVKAIRTGLDEAKPWYKLIKLLSRLSCMAAVAARSKDPVLVAIMLADTGLEILDSTFVVKKISDSLSSLFHVPAPAFSFGAPILLAGLVKVASSFFQSTPEDLERAEKQLKARDINDIFAVLKNGEWLVKLILAIRDWIKAWIASEEKFVTMTDLVPGILERQRDLNDPGKYKEAKEWLDNARQACLKSGNVHIANLCKVVAPAPSKSRPEPVVVCLRGKSGQGKSFLANVLAQAISTHFTGRTDSVWYCPPDPDHFDGYNQQTVVVMDDLGQNPDGKDFKYFAQMVSTTGFIPPMASLEDKGKPFNSKVIIATTNLYSGFTPKTMVCPDALNRRFHFDIDVSAKDGYKINNKLDIVKALEDTHANPVAMFQYDCALLNGMAVEMKRMQQDMFKPQPPLQNIYQLVQEVIERVELHEKVSSHLIFKQISIPSQKSVLYFLIEKGQHEAAIEFFEGMVHDSIKEELRPLIQQTSFVKRAFKRLKENFEVVALCLTLLANIVIMLRQARKRYQSVDDPLDGDVTLGDAEKNPLETSGASAVGFRERSPTEQGTREDANAEPVVFGREQPRAEGPYAGPLERQKPLKVKAELPQQEGPYAGPMERQKPLKVKAKAPVVKEGPYEGPVKKPVALKVKAKNLIVTESGAPPTDLQKMVMGNTKPVELILDGKTVAICCATGVFGTAYLVPRHLFAEKYDKIMLDGRALTDSDYRVFEFEIKVKGQDMLSDAALMVLHRGNRVRDITKHFRDVARMKKGTPVVGVINNADVGRLIFSGEALTYKDIVVCMDGDTMPGLFAYRASTKAGYCGGAVLAKDGAETFIVGTHSAGGNGIGYCSCVSRSMLLKMKAHIDPEPHHEGLIVDTRDVEERVHVMRKTKLAPTVAHGVFNPEFGPAALSNKDPRLNEGVVLDDVIFSKHKGDTRMSEEDKALFRRCAADYASRLHSVLGTANAPLSVYEAIKGVDGLDAMEPDTAPGLPWALQGKRRGALIDFENGTVGPEVEAALKLMESREYKFVCQTFLKDEIRPLEKVRAGKTRIVDVLPVEHILYTRMMIGRFCAQMHSNNGPQIGSAVGCNPDVDWQRFGTHFAQYKNVWDVDYSAFDANHCSDAMNIMFEEVFRTEFGFHPNAEWILKTLVNTEHAYENKRIVVEGGMPSGCSATSIINTILNNIYVLYALRRHYEGVELDTYTMISYGDDIVVASDYDLDFEALKPHFKSLGQTITPADKSDKGFVLGHSITDVTFLKRHFHMDYGTGFYKPVMASKTLEAILSFARRGTIQEKLISVAGLAVHSGPDEYRRLFEPFQGLFEIPSYRSLYLRWVNAVCGDA.

One can recognise a Peptidase C28 domain in the interval 29–182; that stretch reads MEFTLYNGEK…NPADVLVFVP (154 aa). Residues Cys51, His148, and Asp163 each act as for leader protease activity in the active site. Disordered regions lie at residues 199 to 219 and 238 to 262; these read RLRG…SGNT and QLGD…HTNN. Gly202 carries N-myristoyl glycine; by host lipidation. Polar residues-rich tracts occupy residues 204 to 219 and 238 to 251; these read GQSS…SGNT and QLGD…SNEG. Over residues 252-262 the composition is skewed to low complexity; sequence STDTTSTHTNN. The Cell attachment site signature appears at 869-871; that stretch reads RGD. The SF3 helicase domain maps to 1189–1353; sequence NVHIANLCKV…DGYKINNKLD (165 aa). Position 1217-1224 (1217-1224) interacts with ATP; the sequence is GKSGQGKS. An intramembrane segment occupies 1484-1504; that stretch reads FEVVALCLTLLANIVIMLRQA. A disordered region spans residues 1512-1574; it reads DDPLDGDVTL…PRAEGPYAGP (63 aa). A compositionally biased stretch (basic and acidic residues) spans 1539–1553; that stretch reads FRERSPTEQGTREDA. Residues Tyr1571, Tyr1594, and Tyr1618 each carry the O-(5'-phospho-RNA)-tyrosine modification. A Peptidase C3 domain is found at 1642-1838; sequence APPTDLQKMV…YCSCVSRSML (197 aa). His1685 serves as the catalytic For protease 3C activity; Proton donor/acceptor. Catalysis depends on for protease 3C activity residues Asp1723 and Cys1802. Positions 1868-1876 match the Nuclear localization signal motif; it reads MRKTKLAPT. The 119-residue stretch at 2086-2204 folds into the RdRp catalytic domain; it reads KNVWDVDYSA…ASDYDLDFEA (119 aa).

This sequence belongs to the picornaviruses polyprotein family. Interacts with host ISG15. In terms of assembly, interacts (via R-G-D motif) with host ITGAV/ITGB6. Interacts with host MAVS; this interaction inhibits binding of host TRAF3 to MAVS, thereby suppressing interferon-mediated responses. As to quaternary structure, forms homooligomers. Homohexamer. Interacts with host VIM. Interacts with host BECN1. In terms of assembly, interacts with host DCTN3. As to quaternary structure, interacts with RNA-dependent RNA polymerase; this interaction allows 3B-1 to binds 2 polymerases and act as a primer. It also allows the recruitment of the RNA-dependent RNA polymerase to host membranes. Interacts with RNA-dependent RNA polymerase; this interaction allows 3B-2 to act as a primer. In terms of assembly, interacts with RNA-dependent RNA polymerase; this interaction allows 3B-3 to act as a primer. As to quaternary structure, interacts with 3B-1; this interaction allows 3B-1 to binds 2 polymerases and act as a primer. It also allows the recruitment of the RNA-dependent RNA polymerase to host membranes. Interacts with 3B-2; this interaction allows 3B-2 to act as a primer. Interacts with 3B-3; this interaction allows 3B-3 to act as a primer. Removes six residues from its own C-terminus, generating sLb(pro). Post-translationally, specific enzymatic cleavages in vivo by the viral proteases yield a variety of precursors and mature proteins. The polyprotein seems to be cotranslationally cleaved at the 2A/2B junction by a ribosomal skip from one codon to the next without formation of a peptide bond. This process would release the L-P1-2A peptide from the translational complex. In terms of processing, during virion maturation, immature virions are rendered infectious following cleavage of VP0 into VP4 and VP2. This maturation seems to be an autocatalytic event triggered by the presence of RNA in the capsid and is followed by a conformational change of the particle. Myristoylation is required during RNA encapsidation and formation of the mature virus particle. Post-translationally, uridylylated by the polymerase and covalently linked to the 5'-end of genomic RNA. These uridylylated forms act as a nucleotide-peptide primer for the polymerase.

The protein localises to the host nucleus. It localises to the host cytoplasm. The protein resides in the virion. Its subcellular location is the host endoplasmic reticulum membrane. It is found in the host cytoplasmic vesicle membrane. The enzyme catalyses Autocatalytically cleaves itself from the polyprotein of the foot-and-mouth disease virus by hydrolysis of a Lys-|-Gly bond, but then cleaves host cell initiation factor eIF-4G at bonds -Gly-|-Arg- and -Lys-|-Arg-.. It catalyses the reaction a ribonucleoside 5'-triphosphate + H2O = a ribonucleoside 5'-diphosphate + phosphate + H(+). It carries out the reaction RNA(n) + a ribonucleoside 5'-triphosphate = RNA(n+1) + diphosphate. The catalysed reaction is Selective cleavage of Gln-|-Gly bond in the poliovirus polyprotein. In other picornavirus reactions Glu may be substituted for Gln, and Ser or Thr for Gly.. Its function is as follows. Autocatalytically cleaves itself from the polyprotein at the L/VP0 junction. Also cleaves the host translation initiation factors EIF4G1 and EIF4G3, in order to shut off the capped cellular mRNA transcription. Plays a role in counteracting host innate antiviral response using diverse mechanisms. Possesses a deubiquitinase activity acting on both 'Lys-48' and 'Lys-63'-linked polyubiquitin chains. In turn, inhibits the ubiquitination and subsequent activation of key signaling molecules of type I IFN response such as host RIGI, TBK1, TRAF3 and TRAF6. Inhibits host NF-kappa-B activity by inducing a decrease in RELA mRNA levels. Cleaves a peptide bond in the C-terminus of host ISG15, resulting in the damaging of this modifier that can no longer be attached to target proteins. Also cleaves host G3BP1 and G3BP2 in order to inhibit cytoplasmic stress granules assembly. Functionally, lies on the inner surface of the capsid shell. After binding to the host receptor, the capsid undergoes conformational changes. Capsid protein VP4 is released, capsid protein VP1 N-terminus is externalized, and together, they shape a pore in the host membrane through which the viral genome is translocated into the host cell cytoplasm. After genome has been released, the channel shrinks. Forms an icosahedral capsid of pseudo T=3 symmetry with capsid proteins VP1 and VP3. The capsid is composed of 60 copies of each capsid protein organized in the form of twelve pentamers and encloses the viral positive strand RNA genome. Upon acidifcation in the endosome, dissociates into pentamers. In terms of biological role, forms an icosahedral capsid of pseudo T=3 symmetry with capsid proteins VP0 and VP3. The capsid is composed of 60 copies of each capsid protein organized in the form of twelve pentamers and encloses the viral positive strand RNA genome. Upon acidifcation in the endosome, dissociates into pentamers. Its function is as follows. Forms an icosahedral capsid of pseudo T=3 symmetry with capsid proteins VP2 and VP3. The capsid is composed of 60 copies of each capsid protein organized in the form of twelve pentamers and encloses the viral positive strand RNA genome. Mediates cell entry by attachment to an integrin receptor, usually host ITGAV/ITGB6. In addition, targets host MAVS to suppress type I IFN pathway. Upon acidifcation in the endosome, dissociates into pentamers. Functionally, mediates self-processing of the polyprotein by a translational effect termed 'ribosome skipping'. Mechanistically, 2A-mediated cleavage occurs between the C-terminal glycine and the proline of the downstream protein 2B. In the case of foot-and-mouth disease virus, the 2A oligopeptide is post-translationally 'trimmed' from the C-terminus of the upstream protein 1D by 3C proteinase. Plays an essential role in the virus replication cycle by acting as a viroporin. Creates a pore in the host endoplasmic reticulum and as a consequence releases Ca2+ in the cytoplasm of infected cell. In turn, high levels of cytoplasmic calcium may trigger membrane trafficking and transport of viral ER-associated proteins to viroplasms, sites of viral genome replication. In terms of biological role, associates with and induces structural rearrangements of intracellular membranes. Triggers host autophagy by interacting with host BECN1 and thereby promotes viral replication. Participates in viral replication and interacts with host DHX9. Displays RNA-binding, nucleotide binding and NTPase activities. May play a role in virion morphogenesis and viral RNA encapsidation by interacting with the capsid protein VP3. Its function is as follows. Plays important roles in virus replication, virulence and host range. Cooperates with host DDX56 to inhibit IRF3 nuclear translocation and subsequent type I interferon production. Functionally, covalently linked to the 5'-end of both the positive-strand and negative-strand genomic RNAs. Acts as a genome-linked replication primer. Cysteine protease that generates mature viral proteins from the precursor polyprotein. In addition to its proteolytic activity, binds to viral RNA and thus influences viral genome replication. RNA and substrate bind cooperatively to the protease. In terms of biological role, RNA-directed RNA polymerase 3D-POL replicates genomic and antigenomic RNA by recognizing replications specific signals. Covalently attaches UMP to a tyrosine of VPg, which is used to prime RNA synthesis. The positive stranded RNA genome is first replicated at virus induced membranous vesicles, creating a dsRNA genomic replication form. This dsRNA is then used as template to synthesize positive stranded RNA genomes. ss(+)RNA genomes are either translated, replicated or encapsidated. This is Genome polyprotein from Foot-and-mouth disease virus (isolate Swine/Taiwan/OTai/1997 serotype O) (FMDV).